A 206-amino-acid chain; its full sequence is 2,3-bisphosphoglycerate-dependent phosphoglycerate mutase (206 aa).

Substrate is bound by residues 9-16 (RHGQSEWN), 22-23 (TG), Arg-61, 88-91 (ERNY), Lys-99, 115-116 (RR), and 159-160 (GN). His-10 acts as the Tele-phosphohistidine intermediate in catalysis. The active-site Proton donor/acceptor is Glu-88.

The protein belongs to the phosphoglycerate mutase family. BPG-dependent PGAM subfamily. As to quaternary structure, homodimer.

The catalysed reaction is (2R)-2-phosphoglycerate = (2R)-3-phosphoglycerate. Its pathway is carbohydrate degradation; glycolysis; pyruvate from D-glyceraldehyde 3-phosphate: step 3/5. Its function is as follows. Catalyzes the interconversion of 2-phosphoglycerate and 3-phosphoglycerate. In Bartonella henselae (strain ATCC 49882 / DSM 28221 / CCUG 30454 / Houston 1) (Rochalimaea henselae), this protein is 2,3-bisphosphoglycerate-dependent phosphoglycerate mutase.